A 4555-amino-acid chain; its full sequence is Protocadherin Fat 3 (4555 aa).

Residues M1–G31 form the signal peptide. Residues L32–E4153 lie on the Extracellular side of the membrane. Cadherin domains are found at residues T43–F157, S158–I265, P263–K374, E376–F471, Q472–F577, E578–F680, K726–F830, L831–F935, I936–F1042, P1043–T1147, S1148–F1253, P1254–P1358, D1362–F1459, S1460–F1565, T1566–F1768, L1769–F1882, T1883–F1985, T1982–F2083, V2084–F2185, D2186–F2286, D2287–F2393, N2394–F2495, S2496–F2599, M2600–F2707, T2708–F2813, E2814–F2923, A2924–C3028, D3029–F3130, S3131–F3235, E3236–F3340, S3341–F3445, T3446–A3550, and I3551–F3652. N-linked (GlcNAc...) asparagine glycosylation is present at N48. An N-linked (GlcNAc...) asparagine glycan is attached at N341. Residues N481, N562, N667, N799, N879, N898, and N1006 are each glycosylated (N-linked (GlcNAc...) asparagine). N1367 and N1429 each carry an N-linked (GlcNAc...) asparagine glycan. Residue N1751 is glycosylated (N-linked (GlcNAc...) asparagine). Residues N1944, N1993, and N1996 are each glycosylated (N-linked (GlcNAc...) asparagine). N-linked (GlcNAc...) asparagine glycosylation is found at N2208, N2292, N2331, and N2467. N2734 carries N-linked (GlcNAc...) asparagine glycosylation. N-linked (GlcNAc...) asparagine glycosylation occurs at N3000. An N-linked (GlcNAc...) asparagine glycan is attached at N3201. 3 N-linked (GlcNAc...) asparagine glycosylation sites follow: N3449, N3618, and N3741. The EGF-like 1 domain maps to S3794 to S3832. Intrachain disulfides connect C3798/C3809, C3803/C3821, and C3823/C3831. Residues H3834–C4017 form the Laminin G-like domain. N-linked (GlcNAc...) asparagine glycosylation occurs at N3926. Cystine bridges form between C3984-C4017, C4024-C4035, C4029-C4045, C4047-C4056, C4063-C4074, C4068-C4083, C4085-C4094, C4101-C4112, C4106-C4121, and C4123-C4132. EGF-like domains are found at residues Y4020 to E4057 and E4059 to E4095. Residues D4097–G4133 enclose the EGF-like 4; calcium-binding domain. The helical transmembrane segment at L4154 to F4174 threads the bilayer. At R4175 to V4555 the chain is on the cytoplasmic side. Residues S4326–D4343 show a composition bias toward polar residues. Disordered regions lie at residues S4326 to D4347, G4395 to D4424, and P4452 to G4472. Omega-N-methylarginine is present on residues R4508 and R4518.

In terms of tissue distribution, restricted to the nervous system. Abundantly expressed in the fetal brain.

It localises to the membrane. In terms of biological role, may play a role in the interactions between neurites derived from specific subsets of neurons during development. This Rattus norvegicus (Rat) protein is Protocadherin Fat 3 (Fat3).